We begin with the raw amino-acid sequence, 352 residues long: Protein RecA (352 aa).

ATP is bound at residue glycine 67 to threonine 74.

Belongs to the RecA family.

The protein resides in the cytoplasm. Its function is as follows. Can catalyze the hydrolysis of ATP in the presence of single-stranded DNA, the ATP-dependent uptake of single-stranded DNA by duplex DNA, and the ATP-dependent hybridization of homologous single-stranded DNAs. It interacts with LexA causing its activation and leading to its autocatalytic cleavage. The protein is Protein RecA of Chlamydia trachomatis serovar D (strain ATCC VR-885 / DSM 19411 / UW-3/Cx).